Reading from the N-terminus, the 199-residue chain is MKHLVLASGNAGKLEELRAMLADLPLQIVAQGELGVDDVPETGLTFVENALIKARHASTVTGLPALADDSGLIVDALGGAPGLYSARYAGSPTDANANNAKLLEAMREIPAERRSARFYAVIVLLRHPEDPQPLIAEGSWEGVITTAPRGTGGFGYNPVFLDPVHGLTAAEMDTALKNRLSHRAVALATLQHKLHALSL.

8-13 (SGNAGK) lines the substrate pocket. Residue D69 is the Proton acceptor of the active site. Mg(2+) is bound at residue D69. Residues S70, 154-157 (FGYN), K177, and 182-183 (HR) each bind substrate.

Belongs to the HAM1 NTPase family. As to quaternary structure, homodimer. Requires Mg(2+) as cofactor.

It carries out the reaction XTP + H2O = XMP + diphosphate + H(+). It catalyses the reaction dITP + H2O = dIMP + diphosphate + H(+). The catalysed reaction is ITP + H2O = IMP + diphosphate + H(+). Functionally, pyrophosphatase that catalyzes the hydrolysis of nucleoside triphosphates to their monophosphate derivatives, with a high preference for the non-canonical purine nucleotides XTP (xanthosine triphosphate), dITP (deoxyinosine triphosphate) and ITP. Seems to function as a house-cleaning enzyme that removes non-canonical purine nucleotides from the nucleotide pool, thus preventing their incorporation into DNA/RNA and avoiding chromosomal lesions. This Xanthomonas campestris pv. campestris (strain 8004) protein is dITP/XTP pyrophosphatase.